Consider the following 154-residue polypeptide: L-alanine exporter AlaE (154 aa).

4 helical membrane-spanning segments follow: residues 21-41 (FAMVVYCTVVNMLIEIFLSGM), 51-71 (LVAIPVNILIACPYGIYRDFF), 90-110 (ILAYVTFQSPVYAAILWVIGA), and 115-135 (IVAAVSSNMVISMMMGAVYGY).

Belongs to the AlaE exporter family.

It is found in the cell inner membrane. In terms of biological role, exports L-alanine. The sequence is that of L-alanine exporter AlaE from Escherichia fergusonii (strain ATCC 35469 / DSM 13698 / CCUG 18766 / IAM 14443 / JCM 21226 / LMG 7866 / NBRC 102419 / NCTC 12128 / CDC 0568-73).